The primary structure comprises 509 residues: ATP synthase subunit alpha (509 aa).

169–176 (GDRQTGKT) serves as a coordination point for ATP.

Belongs to the ATPase alpha/beta chains family. F-type ATPases have 2 components, CF(1) - the catalytic core - and CF(0) - the membrane proton channel. CF(1) has five subunits: alpha(3), beta(3), gamma(1), delta(1), epsilon(1). CF(0) has four main subunits: a(1), b(1), b'(1) and c(9-12).

It is found in the cell inner membrane. The enzyme catalyses ATP + H2O + 4 H(+)(in) = ADP + phosphate + 5 H(+)(out). Functionally, produces ATP from ADP in the presence of a proton gradient across the membrane. The alpha chain is a regulatory subunit. This chain is ATP synthase subunit alpha, found in Erythrobacter litoralis (strain HTCC2594).